The sequence spans 363 residues: Isopentenyl-diphosphate delta-isomerase (363 aa).

7–8 is a binding site for substrate; it reads RK. FMN-binding positions include 71-73, Ser-101, and Asn-130; that span reads AMT. Gln-160 contributes to the substrate binding site. Glu-161 is a binding site for Mg(2+). Residues Lys-192, Ser-217, Thr-222, 270–272, and 291–292 contribute to the FMN site; these read GIR and AG.

This sequence belongs to the IPP isomerase type 2 family. Homooctamer. Dimer of tetramers. It depends on FMN as a cofactor. Requires NADPH as cofactor. The cofactor is Mg(2+).

The protein resides in the cytoplasm. It catalyses the reaction isopentenyl diphosphate = dimethylallyl diphosphate. Its function is as follows. Involved in the biosynthesis of isoprenoids. Catalyzes the 1,3-allylic rearrangement of the homoallylic substrate isopentenyl (IPP) to its allylic isomer, dimethylallyl diphosphate (DMAPP). This chain is Isopentenyl-diphosphate delta-isomerase, found in Symbiobacterium thermophilum (strain DSM 24528 / JCM 14929 / IAM 14863 / T).